Here is a 685-residue protein sequence, read N- to C-terminus: Hemocyanin subunit X (685 aa).

An N-terminal signal peptide occupies residues 1–20 (MKYCTESLILILAVIGCISA). The Cu cation site is built by histidine 210, histidine 214, and histidine 243. Asparagine 329 is a glycosylation site (N-linked (GlcNAc...) asparagine). Histidine 367, histidine 371, and histidine 407 together coordinate Cu cation. Cysteine 577 and cysteine 625 form a disulfide bridge.

Belongs to the tyrosinase family. Hemocyanin subfamily.

Its subcellular location is the secreted. The protein localises to the extracellular space. In terms of biological role, hemocyanins are copper-containing oxygen carriers occurring freely dissolved in the hemolymph of many mollusks and arthropods. This Scutigera coleoptrata (House centipede) protein is Hemocyanin subunit X (HCX).